The primary structure comprises 546 residues: Sulfite oxidase, mitochondrial (546 aa).

The transit peptide at 1 to 80 (MLLQLYRSVV…YHEHRCRASQ (80 aa)) directs the protein to the mitochondrion. The 80-residue stretch at 83–162 (PRMYSKEDVR…LAEYKIGELN (80 aa)) folds into the Cytochrome b5 heme-binding domain. A heme b-binding site is contributed by H119. S124 bears the Phosphoserine mark. 3 residues coordinate heme b: H144, Q146, and H148. Residues 166 to 175 (SMSPSVEASD) are hinge. The segment at 176-402 (PYADDPIRHP…YSHWQRRDYK (227 aa)) is moco domain. Mo-molybdopterin contacts are provided by residues 216 to 220 (FTRNH), C265, D323, H362, R367, and 378 to 380 (HVK). Residues 403–539 (GFSPSVDWDT…RGVLSNAWHR (137 aa)) are homodimerization.

As to quaternary structure, homodimer. Heme b serves as cofactor. Mo-molybdopterin is required as a cofactor.

It is found in the mitochondrion intermembrane space. It catalyses the reaction sulfite + O2 + H2O = sulfate + H2O2. Its pathway is energy metabolism; sulfur metabolism. Its function is as follows. Catalyzes the oxidation of sulfite to sulfate, the terminal reaction in the oxidative degradation of sulfur-containing amino acids. The protein is Sulfite oxidase, mitochondrial (Suox) of Mus musculus (Mouse).